Reading from the N-terminus, the 1651-residue chain is Vitellogenin-6 (1651 aa).

An N-terminal signal peptide occupies residues 1 to 15 (MKFFIALALLGAALA). The Vitellogenin domain occupies 34 to 716 (FRAGREYRYL…TTESVLPTEM (683 aa)). Asparagine 252 and asparagine 1288 each carry an N-linked (GlcNAc...) asparagine glycan. Positions 1340–1515 (ANCVVKSTKI…SYLYKDSKCN (176 aa)) constitute a VWFD domain. Disulfide bonds link cysteine 1342–cysteine 1479 and cysteine 1364–cysteine 1514. The segment at 1527–1556 (FQRIEKNQEEEKDQEMNYEESRREQDDEPT) is disordered.

Synthesized in Caenorhabditis only by 32 cells building the intestine of adult hermaphroditic individuals; they are cotranslationally secreted into the body cavity and subsequently taken up by the gonad.

The protein localises to the secreted. Precursor of the egg-yolk proteins that are sources of nutrients during embryonic development. May play a role in cholesterol uptake. May be involved in thermotolerance. The protein is Vitellogenin-6 (vit-6) of Caenorhabditis elegans.